Reading from the N-terminus, the 874-residue chain is Chaperone protein ClpB 1 (874 aa).

Positions 6 to 148 constitute a Clp R domain; it reads PNQFTEKAWE…RQIIQQIRGS (143 aa). Repeat stretches follow at residues 9 to 73 and 85 to 148; these read FTEK…IARQ and LGRS…IRGS. Positions 161-342 are NBD1; sequence EALEKYGRDL…RRFQQVFVDQ (182 aa). Residue 208 to 215 participates in ATP binding; sequence GEPGVGKT. A linker region spans residues 343–551; it reads PTVEDTISIL…IAEIISKWTG (209 aa). Residues 393–527 are a coiled coil; sequence IDLVDESAAR…MEGGLATTHT (135 aa). The NBD2 stretch occupies residues 561-772; sequence EMQKLLNLDE…RVDETIIFHS (212 aa). ATP is bound at residue 611 to 618; sequence GPTGVGKT. Residues 773 to 874 are C-terminal; it reads LRKDQLQQIV…IATPTAVPLS (102 aa).

It belongs to the ClpA/ClpB family. As to quaternary structure, homohexamer. The oligomerization is ATP-dependent.

It localises to the cytoplasm. Part of a stress-induced multi-chaperone system, it is involved in the recovery of the cell from heat-induced damage, in cooperation with DnaK, DnaJ and GrpE. Acts before DnaK, in the processing of protein aggregates. Protein binding stimulates the ATPase activity; ATP hydrolysis unfolds the denatured protein aggregates, which probably helps expose new hydrophobic binding sites on the surface of ClpB-bound aggregates, contributing to the solubilization and refolding of denatured protein aggregates by DnaK. Necessary for thermotolerance. The sequence is that of Chaperone protein ClpB 1 (clpB1) from Synechococcus elongatus (strain ATCC 33912 / PCC 7942 / FACHB-805) (Anacystis nidulans R2).